Here is a 712-residue protein sequence, read N- to C-terminus: Solute carrier organic anion transporter family member 1C1 (712 aa).

Over 1-43 (MDTSSKENIQLFCKTSVQPVGRPSFKTEYPSSEEKQPCCGELK) the chain is Cytoplasmic. The helical transmembrane segment at 44–63 (VFLCALSFVYFAKALAEGYL) threads the bilayer. Residues 64 to 82 (KSTITQIERRFDIPSSLVG) are Extracellular-facing. Residues 83-103 (VIDGSFEIGNLLVITFVSYFG) traverse the membrane as a helical segment. Topologically, residues 104-109 (AKLHRP) are cytoplasmic. A helical membrane pass occupies residues 110-134 (KIIGAGCVIMGVGTLLIAMPQFFME). At 135–184 (QYKYERYSPSSNSTLSISPCLLESSSQLPVSVMEKSKSKISNECEVDTSS) the chain is on the extracellular side. Residue Asn-146 is glycosylated (N-linked (GlcNAc...) asparagine). A helical membrane pass occupies residues 185-213 (SMWIYVFLGNLLRGIGETPIQPLGIAYLD). Over 214-232 (DFASEDNAAFYIGCVQTVA) the chain is Cytoplasmic. The chain crosses the membrane as a helical span at residues 233–253 (IIGPIFGFLLGSLCAKLYVDI). At 254–271 (GFVNLDHITITPKDPQWV) the chain is on the extracellular side. The chain crosses the membrane as a helical span at residues 272–296 (GAWWLGYLIAGIISLLAAVPFWYLP). Topologically, residues 297–348 (KSLPRSQSREDSNSSSEKSKFIIDDHTDYQTPQGENAKIMEMARDFLPSLKN) are cytoplasmic. A helical transmembrane segment spans residues 349 to 370 (LFGNPVYFLYLCTSTVQFNSLF). Residues 371–390 (GMVTYKPKYIEQQYGQSSSR) are Extracellular-facing. Residues 391 to 414 (ANFVIGLINIPAVALGIFSGGIVM) form a helical membrane-spanning segment. Topologically, residues 415–418 (KKFR) are cytoplasmic. A helical membrane pass occupies residues 419–442 (ISVCGAAKLYLGSSVFGYLLFLSL). Topologically, residues 443–554 (FALGCENSDV…NGCPQMFLYF (112 aa)) are extracellular. The Kazal-like domain occupies 470 to 525 (RALFSDCNSRCKCSETKWEPMCGENGITYVSACLAGCQTSNRSGKNIIFYNCTCVG). 3 disulfide bridges follow: Cys-476-Cys-506, Cys-482-Cys-502, and Cys-491-Cys-523. N-linked (GlcNAc...) asparagine glycans are attached at residues Asn-510, Asn-520, and Asn-533. A helical membrane pass occupies residues 555–577 (LVISVITSYTLSLGGIPGYILLL). The Cytoplasmic portion of the chain corresponds to 578-586 (RCIKPQLKS). A helical transmembrane segment spans residues 587–612 (FALGIYTLAIRVLAGIPAPVYFGVLI). Topologically, residues 613-646 (DTSCLKWGFKRCGSRGSCRLYDSNVFRHIYLGLT) are extracellular. The helical transmembrane segment at 647-664 (VILGTVSILLSIAVLFIL) threads the bilayer. Residues 665 to 712 (KKNYVSKHRSFITKRERTMVSTRFQKENYTTSDHLLQPNYWPGKETQL) lie on the Cytoplasmic side of the membrane.

This sequence belongs to the organo anion transporter (TC 2.A.60) family. As to expression, highly expressed in brain and in Leydig cells in testis. Localized in nests of Leydig cells (at protein level). Expressed in choroid plexus (at protein level). Not strongly enriched in cerebral microvessels.

The protein resides in the cell membrane. It carries out the reaction 3,3',5'-triiodo-L-thyronine(out) = 3,3',5'-triiodo-L-thyronine(in). The enzyme catalyses L-thyroxine(out) = L-thyroxine(in). It catalyses the reaction L-thyroxine sulfate(out) = L-thyroxine sulfate(in). Mediates the Na(+)-independent high affinity transport of organic anions such as the thyroid hormones L-thyroxine (T4), L-thyroxine sulfate (T4S), and 3,3',5'-triiodo-L-thyronine (reverse T3, rT3) at the plasma membrane. Regulates T4 levels in different brain regions by transporting T4, and also by serving as an export pump for T4S, which is a source of T4 after hydrolysis by local sulfatases. Increases the access of these substrates to the intracellular sites where they are metabolized by the deiodinases. Other potential substrates, such as triiodothyronine (T3), 17-beta-glucuronosyl estradiol (17beta-estradiol 17-O-(beta-D-glucuronate)), estrone-3-sulfate (E1S) and sulfobromophthalein (BSP) are transported with much lower efficiency. Transports T4 and E1S in a pH-insensitive manner. Facilitates the transport of thyroid hormones across the blood-brain barrier and into glia and neuronal cells in the brain. This chain is Solute carrier organic anion transporter family member 1C1 (SLCO1C1), found in Homo sapiens (Human).